Consider the following 156-residue polypeptide: Ribosomal RNA large subunit methyltransferase H (156 aa).

Residues L73, G104, and 123-128 contribute to the S-adenosyl-L-methionine site; that span reads VSSLTL.

Belongs to the RNA methyltransferase RlmH family. In terms of assembly, homodimer.

Its subcellular location is the cytoplasm. The catalysed reaction is pseudouridine(1915) in 23S rRNA + S-adenosyl-L-methionine = N(3)-methylpseudouridine(1915) in 23S rRNA + S-adenosyl-L-homocysteine + H(+). Functionally, specifically methylates the pseudouridine at position 1915 (m3Psi1915) in 23S rRNA. The protein is Ribosomal RNA large subunit methyltransferase H of Burkholderia thailandensis (strain ATCC 700388 / DSM 13276 / CCUG 48851 / CIP 106301 / E264).